Here is a 368-residue protein sequence, read N- to C-terminus: Glycolate oxidase 3 (368 aa).

The residue at position 1 (Met-1) is an N-acetylmethionine. The region spanning 1-359 (MEITNVMEYE…SRTHIKTDWD (359 aa)) is the FMN hydroxy acid dehydrogenase domain. Tyr-24 contacts glyoxylate. FMN contacts are provided by residues 77–79 (PTA), Ser-106, 127–129 (QLY), and Thr-155. Tyr-129 serves as a coordination point for glyoxylate. Arg-164 provides a ligand contact to glyoxylate. FMN-binding residues include Lys-230 and Ser-252. 2 residues coordinate glyoxylate: His-254 and Arg-257. His-254 acts as the Proton acceptor in catalysis. FMN contacts are provided by residues 285-289 (DGGVR) and 308-309 (GR).

The protein belongs to the FMN-dependent alpha-hydroxy acid dehydrogenase family. Homotetramer. FMN is required as a cofactor.

It localises to the peroxisome. The catalysed reaction is glycolate + O2 = glyoxylate + H2O2. It participates in photosynthesis; photorespiration; glycine from 2-phosphoglycolate: step 2/3. Functionally, catalyzes the oxidation of glycolate to glyoxylate, with a reduction of O2 to H2O2. Is a key enzyme in photorespiration in green plants. The chain is Glycolate oxidase 3 (GLO5) from Arabidopsis thaliana (Mouse-ear cress).